The sequence spans 291 residues: Transcription antitermination protein NusB (291 aa).

Belongs to the NusB family.

In terms of biological role, involved in transcription antitermination. Required for transcription of ribosomal RNA (rRNA) genes. Binds specifically to the boxA antiterminator sequence of the ribosomal RNA (rrn) operons. The sequence is that of Transcription antitermination protein NusB from Synechococcus sp. (strain JA-2-3B'a(2-13)) (Cyanobacteria bacterium Yellowstone B-Prime).